Consider the following 501-residue polypeptide: Dye-decolorizing peroxidase (501 aa).

Positions methionine 1–alanine 21 are cleaved as a signal peptide. Positions arginine 22–valine 60 are excised as a propeptide. Aspartate 228 serves as the catalytic Proton acceptor. The N-linked (GlcNAc...) asparagine glycan is linked to asparagine 352. Histidine 367 contributes to the heme binding site. N-linked (GlcNAc...) asparagine glycosylation is present at asparagine 403.

Belongs to the DyP-type peroxidase family. It depends on heme b as a cofactor.

Its subcellular location is the secreted. It catalyses the reaction Reactive Blue 5 + 2 H2O2 = 2,2'-disulfonyl azobenzene + 3-[(4-amino-6-chloro-1,3,5-triazin-2-yl)amino]benzenesulfonate + phthalate + 2 H2O + 2 H(+). It carries out the reaction 2 a phenolic donor + H2O2 = 2 a phenolic radical donor + 2 H2O. Functionally, manganese-independent peroxidase that is able to convert a large number of compounds, but its physiological substrate is not known. In addition to classic peroxidase substrates (e.g. 2,6-dimethoxyphenol), oxidizes dyes such as Reactive Blue 5 and Reactive Black 5. In Exidia glandulosa (Black witch's butter), this protein is Dye-decolorizing peroxidase.